The primary structure comprises 141 residues: Large ribosomal subunit protein uL11 (141 aa).

This sequence belongs to the universal ribosomal protein uL11 family. Part of the ribosomal stalk of the 50S ribosomal subunit. Interacts with L10 and the large rRNA to form the base of the stalk. L10 forms an elongated spine to which L12 dimers bind in a sequential fashion forming a multimeric L10(L12)X complex. One or more lysine residues are methylated.

Forms part of the ribosomal stalk which helps the ribosome interact with GTP-bound translation factors. The protein is Large ribosomal subunit protein uL11 of Fervidobacterium nodosum (strain ATCC 35602 / DSM 5306 / Rt17-B1).